Consider the following 208-residue polypeptide: Troponin I, cardiac muscle (208 aa).

Disordered stretches follow at residues 1 to 37 (MAEE…KISA), 54 to 74 (DLER…GELC), and 168 to 208 (VRKD…GGQS). Position 2 is an N-acetylalanine (Ala2). An involved in binding TNC region spans residues 28 to 73 (HAKRQSKISASRKLQLKTLLLQRAKRDLEREEQERAGEKQRHLGEL). Basic and acidic residues-rich tracts occupy residues 54–71 (DLER…RHLG) and 168–187 (VRKD…RKNV).

This sequence belongs to the troponin I family. As to quaternary structure, binds to actin and tropomyosin.

In terms of biological role, troponin I is the inhibitory subunit of troponin, the thin filament regulatory complex which confers calcium-sensitivity to striated muscle actomyosin ATPase activity. The chain is Troponin I, cardiac muscle (TNNI3) from Coturnix japonica (Japanese quail).